The chain runs to 178 residues: Ribosome maturation factor RimM (178 aa).

The 78-residue stretch at 101-178 (ADEYYWYQLV…VMRVEWDADF (78 aa)) folds into the PRC barrel domain.

It belongs to the RimM family. As to quaternary structure, binds ribosomal protein uS19.

The protein localises to the cytoplasm. An accessory protein needed during the final step in the assembly of 30S ribosomal subunit, possibly for assembly of the head region. Essential for efficient processing of 16S rRNA. May be needed both before and after RbfA during the maturation of 16S rRNA. It has affinity for free ribosomal 30S subunits but not for 70S ribosomes. The protein is Ribosome maturation factor RimM of Pseudomonas putida (strain ATCC 47054 / DSM 6125 / CFBP 8728 / NCIMB 11950 / KT2440).